The sequence spans 321 residues: Phospho-N-acetylmuramoyl-pentapeptide-transferase (321 aa).

The next 10 membrane-spanning stretches (helical) occupy residues 1 to 21 (MVYLLAIIALLITFILVPVLI), 50 to 70 (MGGLTFLISIIITSILAIIFI), 76 to 96 (IILLLFVTIGFGLIGFIDDYI), 112 to 132 (FLAQIAIAVIFFILSQVFNLT), 140 to 160 (IPFINFEIPLSIAYVIFIVFW), 173 to 193 (GLDGLATGLSIIGFVMYAIMA), 198 to 218 (ATSIGLFCIIMIFALLGFLPF), 225 to 245 (VFMGDTGSLALGGIFATISIM), 250 to 270 (LSLLFIGFVFVAETLSVMIQV), and 300 to 320 (VVTVFWTVGLITGLIGLWIGV).

The protein belongs to the glycosyltransferase 4 family. MraY subfamily. The cofactor is Mg(2+).

Its subcellular location is the cell membrane. It catalyses the reaction UDP-N-acetyl-alpha-D-muramoyl-L-alanyl-gamma-D-glutamyl-L-lysyl-D-alanyl-D-alanine + di-trans,octa-cis-undecaprenyl phosphate = Mur2Ac(oyl-L-Ala-gamma-D-Glu-L-Lys-D-Ala-D-Ala)-di-trans,octa-cis-undecaprenyl diphosphate + UMP. The protein operates within cell wall biogenesis; peptidoglycan biosynthesis. In terms of biological role, catalyzes the initial step of the lipid cycle reactions in the biosynthesis of the cell wall peptidoglycan: transfers peptidoglycan precursor phospho-MurNAc-pentapeptide from UDP-MurNAc-pentapeptide onto the lipid carrier undecaprenyl phosphate, yielding undecaprenyl-pyrophosphoryl-MurNAc-pentapeptide, known as lipid I. The sequence is that of Phospho-N-acetylmuramoyl-pentapeptide-transferase from Staphylococcus saprophyticus subsp. saprophyticus (strain ATCC 15305 / DSM 20229 / NCIMB 8711 / NCTC 7292 / S-41).